The following is a 590-amino-acid chain: MLRSHAAGSLRPADAGQNVTLAGWVARRRDHGGVIFIDLRDASGVSQVVFREGAVLEAAHRLRAEFCVAVEGVVEVRPEGNENPEIPTGGIEVNATSLTVLGESAPLPFQLDDEAGEEARLKYRYLDLRREGPGKALRLRSKVNAAAREVLARHDFVEIETPTMTRSTPEGARDFLVPARLQPGSFYALPQSPQLFKQLLMVAGMERYYQIARCYRDEDFRADRQPEFTQLDMEMSFVDADDVIAVSEEILKALWALIGHDLPTPLPRITYAEAMRRFGTDKPDLRFGLELVECKEFFADTTFRVFQAPYVGAVVMPGGASQPRRTLDGWQEWAKQRGAKGLAYVLVGDDGTLGGPVAKNLTDAERDGLAAHVGANPGDCIFFAAGPPKSSRALLGAARIEIAKRLDMIDPDAWAFTWVVDWPLFEMAEDATAAGDVAVGSGAWTAVHHAFTAPQPQSEATFDTDPAGALADAYDIVCNGNEIGGGSIRIHRRDVQERVFAMMGIEHDEAQEKFGFLLDAFTFGAPPHGGIAFGWDRITALLARMDSIREVIAFPKSGGGADPLTGAPAPITPQQRRESGIDAKPKKDGE.

E170 lines the L-aspartate pocket. An aspartate region spans residues 194 to 197 (QLFK). R216 lines the L-aspartate pocket. ATP is bound by residues 216–218 (RDE) and Q225. H448 lines the L-aspartate pocket. Residue E482 participates in ATP binding. R489 contributes to the L-aspartate binding site. 534–537 (GWDR) is an ATP binding site. The disordered stretch occupies residues 557–590 (SGGGADPLTGAPAPITPQQRRESGIDAKPKKDGE). A compositionally biased stretch (basic and acidic residues) spans 575–590 (QRRESGIDAKPKKDGE).

It belongs to the class-II aminoacyl-tRNA synthetase family. Type 1 subfamily. As to quaternary structure, homodimer.

The protein resides in the cytoplasm. The catalysed reaction is tRNA(Asx) + L-aspartate + ATP = L-aspartyl-tRNA(Asx) + AMP + diphosphate. Functionally, aspartyl-tRNA synthetase with relaxed tRNA specificity since it is able to aspartylate not only its cognate tRNA(Asp) but also tRNA(Asn). Reaction proceeds in two steps: L-aspartate is first activated by ATP to form Asp-AMP and then transferred to the acceptor end of tRNA(Asp/Asn). The chain is Aspartate--tRNA(Asp/Asn) ligase from Mycobacterium sp. (strain JLS).